The chain runs to 151 residues: Large ribosomal subunit protein bL9 (151 aa).

The protein belongs to the bacterial ribosomal protein bL9 family.

Its function is as follows. Binds to the 23S rRNA. The chain is Large ribosomal subunit protein bL9 from Lactobacillus helveticus (strain DPC 4571).